A 69-amino-acid chain; its full sequence is DNA gyrase inhibitor YacG (69 aa).

Positions 14, 17, 33, and 37 each coordinate Zn(2+).

The protein belongs to the DNA gyrase inhibitor YacG family. As to quaternary structure, interacts with GyrB. Zn(2+) serves as cofactor.

In terms of biological role, inhibits all the catalytic activities of DNA gyrase by preventing its interaction with DNA. Acts by binding directly to the C-terminal domain of GyrB, which probably disrupts DNA binding by the gyrase. The chain is DNA gyrase inhibitor YacG from Aliivibrio salmonicida (strain LFI1238) (Vibrio salmonicida (strain LFI1238)).